The following is a 188-amino-acid chain: UPF0232 protein RHA1_ro03670 (188 aa).

Disordered regions lie at residues 1–20 (MTDD…PEVK), 31–78 (EARA…QPFG), and 166–188 (PTAP…DTYG). Low complexity predominate over residues 7-16 (PTAPAAAAPE).

This sequence belongs to the UPF0232 family.

The sequence is that of UPF0232 protein RHA1_ro03670 from Rhodococcus jostii (strain RHA1).